A 408-amino-acid chain; its full sequence is Voltage-gated potassium channel subunit beta-1 (408 aa).

Thr-97, Trp-98, Gln-104, and Asp-126 together coordinate NADP(+). The active-site Proton donor/acceptor is the Tyr-131. Positions 199, 229, 230, 255, 284, 285, 286, 287, 288, 289, 295, 305, 364, 366, 370, 373, and 374 each coordinate NADP(+).

This sequence belongs to the shaker potassium channel beta subunit family. In terms of assembly, homotetramer. Interaction with tetrameric potassium channel alpha subunits gives rise to a heterooctamer. Identified in potassium channel complexes containing KCNA1, KCNA2, KCNA4, KCNA5, KCNA6, KCNAB1 and KCNAB2. Part of a complex containing KCNA1, KCNA4 and LGI1; interaction with LGI1 inhibits down-regulation of KCNA1 channel activity. Interacts with the dimer formed by GNB1 and GNG2; this enhances KCNA1 binding. Interacts with SQSTM1. Expression most abundant in aorta. Also high in left ventricle. Also detected in right ventricle, atrium, brain, skeletal muscle and kidney. Not detected in liver.

It is found in the cytoplasm. It localises to the membrane. The protein localises to the cell membrane. The catalysed reaction is a primary alcohol + NADP(+) = an aldehyde + NADPH + H(+). It carries out the reaction a secondary alcohol + NADP(+) = a ketone + NADPH + H(+). In terms of biological role, regulatory subunit of the voltage-gated potassium (Kv) Shaker channels composed of pore-forming and potassium-conducting alpha subunits and of regulatory beta subunits. The beta-1/KCNAB1 cytoplasmic subunit mediates closure of delayed rectifier potassium channels by physically obstructing the pore via its N-terminal domain and increases the speed of channel closure for other family members. Promotes the inactivation of Kv1.1/KCNA1, Kv1.2/KCNA2, Kv1.4/KCNA4, Kv1.5/KCNA5 and Kv1.6/KCNA6 alpha subunit-containing channels. Displays nicotinamide adenine dinucleotide phosphate (NADPH)-dependent aldoketoreductase activity by catalyzing the NADPH-dependent reduction of a variety of endogenous aldehydes and ketones. The binding of NADPH is required for efficient down-regulation of potassium channel activity. Oxidation of the bound NADPH restrains N-terminal domain from blocking the channel, thereby decreasing N-type inactivation of potassium channel activity. The chain is Voltage-gated potassium channel subunit beta-1 (KCNAB1) from Mustela putorius (European polecat).